A 105-amino-acid polypeptide reads, in one-letter code: Small ribosomal subunit protein uS10 (105 aa).

This sequence belongs to the universal ribosomal protein uS10 family. In terms of assembly, part of the 30S ribosomal subunit.

Functionally, involved in the binding of tRNA to the ribosomes. This chain is Small ribosomal subunit protein uS10, found in Chlamydia muridarum (strain MoPn / Nigg).